A 440-amino-acid chain; its full sequence is Chitinase-like protein Idgf5 (440 aa).

A signal peptide spans 1 to 27; sequence MRNKMIYFNFHLFVIIFANLQIFQVQA. The region spanning 28-439 is the GH18 domain; the sequence is ANIFCYYDTQ…KSIHNAFKKF (412 aa). A disulfide bridge connects residues cysteine 32 and cysteine 56. Asparagine 126, asparagine 283, and asparagine 403 each carry an N-linked (GlcNAc...) asparagine glycan. An intrachain disulfide couples cysteine 340 to cysteine 421.

This sequence belongs to the glycosyl hydrolase 18 family. IDGF subfamily. Glycosylated.

The protein resides in the secreted. Cooperates with insulin-like peptides to stimulate the proliferation, polarization and motility of imaginal disk cells. May act by stabilizing the binding of insulin-like peptides to its receptor through a simultaneous interaction with both molecules to form a multiprotein signaling complex. The protein is Chitinase-like protein Idgf5 (Idgf5) of Glossina morsitans morsitans (Savannah tsetse fly).